The sequence spans 792 residues: Probable beta-D-xylosidase 6 (792 aa).

The signal sequence occupies residues 1-18 (MNLQLTLISLLFFTSAIA). 4 N-linked (GlcNAc...) asparagine glycosylation sites follow: Asn44, Asn104, Asn124, and Asn239. Asp309 is a catalytic residue. N-linked (GlcNAc...) asparagine glycans are attached at residues Asn444 and Asn618.

Belongs to the glycosyl hydrolase 3 family.

Its subcellular location is the secreted. The protein resides in the extracellular space. The protein localises to the extracellular matrix. This Arabidopsis thaliana (Mouse-ear cress) protein is Probable beta-D-xylosidase 6 (BXL6).